A 703-amino-acid chain; its full sequence is Neoverrucotoxin subunit alpha (703 aa).

Serine 2 carries the post-translational modification N-acetylserine. In terms of domain architecture, B30.2/SPRY spans 508–703 (PRMPFVQGYK…RFDHGTVRLL (196 aa)).

It belongs to the SNTX/VTX toxin family. Heterodimer of alpha and beta subunits. In terms of processing, not glycosylated. Four intrachain disulfide linkages are present in the heterodimer. No interchain disulfide bound links the two subunits. Expressed by the venom gland.

The protein localises to the secreted. Functionally, has hemolytic and lethal activities. Its hemolytic activity is inhibited by anionic lipids, especially potently by cardiolipin. The polypeptide is Neoverrucotoxin subunit alpha (Synanceia verrucosa (Reef stonefish)).